Reading from the N-terminus, the 340-residue chain is MKLAVIGGDGIGPEVTAEALKVLNAVRDDIETTDYDLGARRYLKNGELLTDEDLASLREHDAILLGAIGAPGSVPPGILERGLLLKMRFALDHHVNLRPSKLYDGVESPLRNPGKIDFVVVREGTEGAYTGNGGAIRVGTAHEIANETSVNTRYGAERVIRYAFELAQSRRKKLTLVHKTNVLVHGGGLWQRTVDEVAKEYPEVAVDYNHIDAATIYLITDPSRFDVIVTDNLFGDILTDEAGAVSGGIGLAASGNIDATGTNPSMFEPVHGSAPDIAGQGIADPTAAILSAAMLLRHLGDEDNAVRIETAIAADVAGRDNSQPISTTEVGDRIVKALQS.

Arginine 88, arginine 98, arginine 122, and aspartate 212 together coordinate substrate. Residues aspartate 212, aspartate 236, and aspartate 240 each coordinate Mg(2+). Residue 272 to 284 (GSAPDIAGQGIAD) participates in NAD(+) binding.

It belongs to the isocitrate and isopropylmalate dehydrogenases family. LeuB type 2 subfamily. As to quaternary structure, homodimer. Mg(2+) serves as cofactor. Requires Mn(2+) as cofactor.

It is found in the cytoplasm. The catalysed reaction is (2R,3S)-3-isopropylmalate + NAD(+) = 4-methyl-2-oxopentanoate + CO2 + NADH. The protein operates within amino-acid biosynthesis; L-leucine biosynthesis; L-leucine from 3-methyl-2-oxobutanoate: step 3/4. Catalyzes the oxidation of 3-carboxy-2-hydroxy-4-methylpentanoate (3-isopropylmalate) to 3-carboxy-4-methyl-2-oxopentanoate. The product decarboxylates to 4-methyl-2 oxopentanoate. This chain is 3-isopropylmalate dehydrogenase, found in Corynebacterium glutamicum (strain R).